Reading from the N-terminus, the 263-residue chain is Small ribosomal subunit protein uS2 (263 aa).

Residues 228-263 form a disordered region; the sequence is QLEEPEADLADEDDNGMTTSDDGDAEALDIPDDSDA. Over residues 230–263 the composition is skewed to acidic residues; that stretch reads EEPEADLADEDDNGMTTSDDGDAEALDIPDDSDA.

Belongs to the universal ribosomal protein uS2 family.

This Thermosynechococcus vestitus (strain NIES-2133 / IAM M-273 / BP-1) protein is Small ribosomal subunit protein uS2.